The following is a 420-amino-acid chain: Alpha-ketoglutarate-dependent xanthine dioxygenase xan-1 (420 aa).

His157 and Asp159 together coordinate Fe cation. Positions 206 and 336 each coordinate 2-oxoglutarate. His351 is a Fe cation binding site. Residue Arg366 coordinates 2-oxoglutarate. Arg366 provides a ligand contact to substrate.

It belongs to the TfdA dioxygenase family. It depends on Fe(2+) as a cofactor.

Its subcellular location is the cytoplasm. The protein localises to the cytosol. It catalyses the reaction xanthine + 2-oxoglutarate + O2 = urate + succinate + CO2. Its function is as follows. Alpha-ketoglutarate-dependent xanthine dioxygenase is a non-heme mononuclear Fe(2+) enzyme that decarboxylates alpha-ketoglutarate to succinate and CO(2) while hydroxylating xanthine to generate uric acid. Allows xanthine utilization as a nitrogen source. The polypeptide is Alpha-ketoglutarate-dependent xanthine dioxygenase xan-1 (Neurospora crassa (strain ATCC 24698 / 74-OR23-1A / CBS 708.71 / DSM 1257 / FGSC 987)).